The chain runs to 480 residues: ATP synthase subunit beta (480 aa).

Position 154 to 161 (154 to 161 (GGAGVGKT)) interacts with ATP.

It belongs to the ATPase alpha/beta chains family. In terms of assembly, F-type ATPases have 2 components, CF(1) - the catalytic core - and CF(0) - the membrane proton channel. CF(1) has five subunits: alpha(3), beta(3), gamma(1), delta(1), epsilon(1). CF(0) has four main subunits: a(1), b(1), b'(1) and c(9-12).

It is found in the cell inner membrane. It carries out the reaction ATP + H2O + 4 H(+)(in) = ADP + phosphate + 5 H(+)(out). Produces ATP from ADP in the presence of a proton gradient across the membrane. The catalytic sites are hosted primarily by the beta subunits. The chain is ATP synthase subunit beta from Bradyrhizobium sp. (strain ORS 278).